Here is a 137-residue protein sequence, read N- to C-terminus: Ciliary microtubule inner protein 1 (137 aa).

Expressed in airway epithelial cells, renal tubular cells, pancreatic acinar cells and epithelial cells of the stomach, duodenum, and gallbladder (at protein level).

It is found in the cell projection. Its subcellular location is the cilium. This is Ciliary microtubule inner protein 1 from Homo sapiens (Human).